Here is a 519-residue protein sequence, read N- to C-terminus: Sodium-dependent dicarboxylate transporter SdcS (519 aa).

14 consecutive transmembrane segments (helical) span residues 29–49 (VGQL…LLLF), 59–79 (VFVL…AIPI), 103–123 (AQYG…AIAM), 136–156 (IINT…IATG), 159–179 (SMFV…LAII), 201–221 (ALVL…LIGT), 241–261 (FAKW…LVWI), 297–317 (KVVL…EFLL), 322–342 (FTSE…LFLI), 362–382 (LPWG…GISE), 395–415 (LIEG…VLFL), 428–448 (ILPI…LLMV), 451–471 (AMAA…AIVF), and 490–510 (LLSI…VLGI).

Belongs to the SLC13A/DASS transporter (TC 2.A.47) family. NADC subfamily.

It is found in the cell membrane. Mediates the transport of dicarboxylates across the cytoplasmic membrane via a Na(+)-electrochemical gradient. This is Sodium-dependent dicarboxylate transporter SdcS (sdcS) from Staphylococcus saprophyticus subsp. saprophyticus (strain ATCC 15305 / DSM 20229 / NCIMB 8711 / NCTC 7292 / S-41).